A 542-amino-acid chain; its full sequence is GMP synthase [glutamine-hydrolyzing] (542 aa).

The Glutamine amidotransferase type-1 domain occupies 28–218 (MIVILDFGSQ…VYHICECEPT (191 aa)). The active-site Nucleophile is cysteine 105. Catalysis depends on residues histidine 192 and glutamate 194. A GMPS ATP-PPase domain is found at 219 to 417 (WTTEAFVEEA…IGLPEEIVRR (199 aa)). Residue 246-252 (SGGVDSS) participates in ATP binding.

In terms of assembly, homodimer.

It catalyses the reaction XMP + L-glutamine + ATP + H2O = GMP + L-glutamate + AMP + diphosphate + 2 H(+). It functions in the pathway purine metabolism; GMP biosynthesis; GMP from XMP (L-Gln route): step 1/1. In terms of biological role, catalyzes the synthesis of GMP from XMP. This Gloeothece citriformis (strain PCC 7424) (Cyanothece sp. (strain PCC 7424)) protein is GMP synthase [glutamine-hydrolyzing].